Reading from the N-terminus, the 101-residue chain is Replication restart protein PriB (101 aa).

Residues 1–101 (MTTNNLVLAG…LHAENVELKT (101 aa)) enclose the SSB domain.

It belongs to the PriB family. As to quaternary structure, homodimer. Interacts with PriA and DnaT. Component of the replication restart primosome. Primosome assembly occurs via a 'hand-off' mechanism. PriA binds to replication forks, subsequently PriB then DnaT bind; DnaT then displaces ssDNA to generate the helicase loading substrate.

In terms of biological role, involved in the restart of stalled replication forks, which reloads the replicative helicase on sites other than the origin of replication; the PriA-PriB pathway is the major replication restart pathway. During primosome assembly it facilitates complex formation between PriA and DnaT on DNA; stabilizes PriA on DNA. Stimulates the DNA unwinding activity of PriA helicase. The chain is Replication restart protein PriB from Shewanella piezotolerans (strain WP3 / JCM 13877).